The sequence spans 714 residues: Elongation factor G-like protein (714 aa).

Positions 21-289 (GGVRNVVLVG…VATRGFPSPM (269 aa)) constitute a tr-type G domain. A G1 region spans residues 30–37 (GPSGGGKT). Position 30–37 (30–37 (GPSGGGKT)) interacts with GTP. Residues 73-77 (QRSVG) are G2. The interval 94-97 (DTPG) is G3. Residues 94–98 (DTPGY) and 148–151 (TKLD) contribute to the GTP site. Residues 148–151 (TKLD) form a G4 region. The interval 267–269 (CSS) is G5.

The protein belongs to the TRAFAC class translation factor GTPase superfamily. Classic translation factor GTPase family. EF-G/EF-2 subfamily.

The polypeptide is Elongation factor G-like protein (Mycobacterium tuberculosis (strain ATCC 25618 / H37Rv)).